Here is a 405-residue protein sequence, read N- to C-terminus: Probable tRNA sulfurtransferase (405 aa).

Residues glutamate 60–leucine 165 enclose the THUMP domain. ATP-binding positions include methionine 183–leucine 184, histidine 208–phenylalanine 209, arginine 265, glycine 287, and glutamine 296.

The protein belongs to the ThiI family.

Its subcellular location is the cytoplasm. It carries out the reaction [ThiI sulfur-carrier protein]-S-sulfanyl-L-cysteine + a uridine in tRNA + 2 reduced [2Fe-2S]-[ferredoxin] + ATP + H(+) = [ThiI sulfur-carrier protein]-L-cysteine + a 4-thiouridine in tRNA + 2 oxidized [2Fe-2S]-[ferredoxin] + AMP + diphosphate. It catalyses the reaction [ThiS sulfur-carrier protein]-C-terminal Gly-Gly-AMP + S-sulfanyl-L-cysteinyl-[cysteine desulfurase] + AH2 = [ThiS sulfur-carrier protein]-C-terminal-Gly-aminoethanethioate + L-cysteinyl-[cysteine desulfurase] + A + AMP + 2 H(+). It functions in the pathway cofactor biosynthesis; thiamine diphosphate biosynthesis. In terms of biological role, catalyzes the ATP-dependent transfer of a sulfur to tRNA to produce 4-thiouridine in position 8 of tRNAs, which functions as a near-UV photosensor. Also catalyzes the transfer of sulfur to the sulfur carrier protein ThiS, forming ThiS-thiocarboxylate. This is a step in the synthesis of thiazole, in the thiamine biosynthesis pathway. The sulfur is donated as persulfide by IscS. In Lactobacillus delbrueckii subsp. bulgaricus (strain ATCC BAA-365 / Lb-18), this protein is Probable tRNA sulfurtransferase.